The following is a 170-amino-acid chain: Shikimate kinase (170 aa).

Residue 11–16 coordinates ATP; that stretch reads GAGKTT. Thr-15 contacts Mg(2+). Substrate-binding residues include Asp-33, Arg-57, and Gly-80. An ATP-binding site is contributed by Arg-119. Arg-141 is a binding site for substrate.

Belongs to the shikimate kinase family. In terms of assembly, monomer. It depends on Mg(2+) as a cofactor.

Its subcellular location is the cytoplasm. It catalyses the reaction shikimate + ATP = 3-phosphoshikimate + ADP + H(+). The protein operates within metabolic intermediate biosynthesis; chorismate biosynthesis; chorismate from D-erythrose 4-phosphate and phosphoenolpyruvate: step 5/7. Catalyzes the specific phosphorylation of the 3-hydroxyl group of shikimic acid using ATP as a cosubstrate. The sequence is that of Shikimate kinase from Azobacteroides pseudotrichonymphae genomovar. CFP2.